A 325-amino-acid polypeptide reads, in one-letter code: Tetraacyldisaccharide 4'-kinase (325 aa).

54 to 61 is an ATP binding site; the sequence is SVGGTGKT.

It belongs to the LpxK family.

The catalysed reaction is a lipid A disaccharide + ATP = a lipid IVA + ADP + H(+). It participates in glycolipid biosynthesis; lipid IV(A) biosynthesis; lipid IV(A) from (3R)-3-hydroxytetradecanoyl-[acyl-carrier-protein] and UDP-N-acetyl-alpha-D-glucosamine: step 6/6. Its function is as follows. Transfers the gamma-phosphate of ATP to the 4'-position of a tetraacyldisaccharide 1-phosphate intermediate (termed DS-1-P) to form tetraacyldisaccharide 1,4'-bis-phosphate (lipid IVA). This Rickettsia felis (strain ATCC VR-1525 / URRWXCal2) (Rickettsia azadi) protein is Tetraacyldisaccharide 4'-kinase.